We begin with the raw amino-acid sequence, 145 residues long: MAGSRKVAREFTLQGIYAWMIGGADVTLIAANLKEDEQFKRADEAYFRTLLYGVLKEEDMLSSRIAPLLDRAVAELSPIERSILLIGAYELLHCPDVPWRVAINESVELAKKFGGTDGHKYINGVLDKLAQDVRAVEIEHAKKRD.

The protein belongs to the NusB family.

Its function is as follows. Involved in transcription antitermination. Required for transcription of ribosomal RNA (rRNA) genes. Binds specifically to the boxA antiterminator sequence of the ribosomal RNA (rrn) operons. In Thiobacillus denitrificans (strain ATCC 25259 / T1), this protein is Transcription antitermination protein NusB.